Consider the following 354-residue polypeptide: DNA polymerase IV (354 aa).

The UmuC domain occupies 6–187 (IIHVDCDCFY…LPVARLHGVG (182 aa)). Residues Asp-10 and Asp-105 each coordinate Mg(2+). Glu-106 is an active-site residue.

It belongs to the DNA polymerase type-Y family. In terms of assembly, monomer. It depends on Mg(2+) as a cofactor.

It localises to the cytoplasm. The enzyme catalyses DNA(n) + a 2'-deoxyribonucleoside 5'-triphosphate = DNA(n+1) + diphosphate. In terms of biological role, poorly processive, error-prone DNA polymerase involved in untargeted mutagenesis. Copies undamaged DNA at stalled replication forks, which arise in vivo from mismatched or misaligned primer ends. These misaligned primers can be extended by PolIV. Exhibits no 3'-5' exonuclease (proofreading) activity. May be involved in translesional synthesis, in conjunction with the beta clamp from PolIII. This is DNA polymerase IV from Pseudomonas putida (strain GB-1).